The sequence spans 66 residues: Photosystem II reaction center protein J (66 aa).

A helical transmembrane segment spans residues 37–57 (LWLVATAGGMAVLFVVGLFFY).

This sequence belongs to the PsbJ family. As to quaternary structure, PSII is composed of 1 copy each of membrane proteins PsbA, PsbB, PsbC, PsbD, PsbE, PsbF, PsbH, PsbI, PsbJ, PsbK, PsbL, PsbM, PsbT, PsbX, PsbY, PsbZ, Psb30/Ycf12, peripheral proteins PsbO, CyanoQ (PsbQ), PsbU, PsbV and a large number of cofactors. It forms dimeric complexes.

The protein localises to the cellular thylakoid membrane. One of the components of the core complex of photosystem II (PSII). PSII is a light-driven water:plastoquinone oxidoreductase that uses light energy to abstract electrons from H(2)O, generating O(2) and a proton gradient subsequently used for ATP formation. It consists of a core antenna complex that captures photons, and an electron transfer chain that converts photonic excitation into a charge separation. The polypeptide is Photosystem II reaction center protein J (Synechococcus sp. (strain WH7803)).